The chain runs to 652 residues: Acetolactate synthase 3, chloroplastic (652 aa).

Residues 1 to 20 are compositionally biased toward polar residues; it reads MAAATSSSPISLTAKPSSKS. A disordered region spans residues 1-23; the sequence is MAAATSSSPISLTAKPSSKSPLP. Residues 1–69 constitute a chloroplast transit peptide; sequence MAAATSSSPI…PEKTDKIKTF (69 aa). Glu126 lines the thiamine diphosphate pocket. FAD is bound by residues Arg228, 334 to 355, and 377 to 396; these read HGTV…FGVR and DIDS…VCGD. Residues 469 to 549 form a thiamine pyrophosphate binding region; that stretch reads QHQMWAAQFY…VKILLLNNQH (81 aa). Residues Asp520 and Asn547 each contribute to the Mg(2+) site.

The protein belongs to the TPP enzyme family. Mg(2+) is required as a cofactor. Thiamine diphosphate serves as cofactor.

It localises to the plastid. The protein localises to the chloroplast. The catalysed reaction is 2 pyruvate + H(+) = (2S)-2-acetolactate + CO2. It functions in the pathway amino-acid biosynthesis; L-isoleucine biosynthesis; L-isoleucine from 2-oxobutanoate: step 1/4. It participates in amino-acid biosynthesis; L-valine biosynthesis; L-valine from pyruvate: step 1/4. The protein is Acetolactate synthase 3, chloroplastic of Brassica napus (Rape).